The primary structure comprises 985 residues: Invasin (985 aa).

Positions 494 to 594 are D1; the sequence is SVTVQQPQLT…RQSVDTHFVK (101 aa). The Extracellular portion of the chain corresponds to 494-985; the sequence is SVTVQQPQLT…LAFPLCALAI (492 aa). 2 consecutive Big-1 domains span residues 503 to 594 and 601 to 691; these read TLTA…HFVK and KSTL…VNFT. Residues 595–694 form a D2 region; sequence GTIAADKSTL…SVTVNFTADP (100 aa). Residues 695–794 form a D3 region; sequence IPDAGRSSFT…LQKKISLFPV (100 aa). Residues 795 to 886 form a D4 region; it reads PTLTGILVNG…YSVSYRFYPN (92 aa). Positions 795–985 are integrin-binding; the sequence is PTLTGILVNG…LAFPLCALAI (191 aa). The segment at 887–985 is D5; the sequence is RWIYDGGTSL…LAFPLCALAI (99 aa). Residues C906 and C981 are joined by a disulfide bond.

Belongs to the intimin/invasin family.

The protein localises to the cell surface. Its function is as follows. Invasin is a protein that allows enteric bacteria to penetrate cultured mammalian cells. The entry of invasin in the cell is mediated by binding several beta-1 chain integrins. The sequence is that of Invasin from Yersinia pseudotuberculosis serotype I (strain IP32953).